The sequence spans 230 residues: Preflagellin peptidase (230 aa).

Position 1 (methionine 1) is a topological domain, cytoplasmic. A helical transmembrane segment spans residues 2-18 (IEYIIGALGLIIASVQD). Residues 19-23 (FRSRE) lie on the Extracellular side of the membrane. Residues 24-46 (IEDYIWIFLAVFGVLFAIYSSIT) form a helical membrane-spanning segment. The Cytoplasmic segment spans residues 47-49 (LLD). A helical membrane pass occupies residues 50–72 (YSILINSISGFVICFILGYMMFL). Residues 73 to 78 (SGIGGG) lie on the Extracellular side of the membrane. Residues 79–89 (DGKMLIGLGAL) form a helical membrane-spanning segment. At 90–110 (VPKFQMPIYTSLGTLLNLNYV) the chain is on the cytoplasmic side. A helical membrane pass occupies residues 111 to 139 (PTFPIMVFINGIFFMVFLPFVILFRNILN). At 140-204 (GARPKTGKEF…EEIWVTPQIP (65 aa)) the chain is on the extracellular side. A helical membrane pass occupies residues 205-216 (LIIPITLSYLVT). Topologically, residues 217–230 (PIIGDRILDFLIPF) are cytoplasmic.

This sequence belongs to the peptidase A24 family. Archaeal preflagellin peptidase subfamily.

It is found in the cell membrane. It carries out the reaction Cleaves the signal peptide of 3 to 12 amino acids from the N-terminal of preflagellin, usually at Arg-Gly-|- or Lys-Gly-|-, to release flagellin.. Cleaves the N-terminal leader peptide from preflagellins. In Methanococcus maripaludis (strain C6 / ATCC BAA-1332), this protein is Preflagellin peptidase (flaK).